The following is a 381-amino-acid chain: Probable glucuronosyltransferase Os04g0103100 (381 aa).

Over 1–69 (MASIRRPHSP…HTSFRRPLPR (69 aa)) the chain is Cytoplasmic. The disordered stretch occupies residues 21–50 (HLGPFASSSPPSSPLRHSSSSSSPRSAAHH). Over residues 26–46 (ASSSPPSSPLRHSSSSSSPRS) the composition is skewed to low complexity. A helical; Signal-anchor for type II membrane protein membrane pass occupies residues 70–90 (FAAFFLLGSFLGLLHFLSHLP). The Lumenal segment spans residues 91-381 (RPLGPIPNPN…TDLDVIIPLK (291 aa)). The interval 96 to 122 (IPNPNSHHRHRDPFPILQHPHPPSTPH) is disordered. 2 N-linked (GlcNAc...) asparagine glycosylation sites follow: N194 and N296.

Belongs to the glycosyltransferase 43 family.

The protein localises to the golgi apparatus membrane. Its function is as follows. Involved in the synthesis of glucuronoxylan hemicellulose in secondary cell walls. This chain is Probable glucuronosyltransferase Os04g0103100, found in Oryza sativa subsp. japonica (Rice).